We begin with the raw amino-acid sequence, 91 residues long: DNA-directed RNA polymerase subunit omega (91 aa).

Belongs to the RNA polymerase subunit omega family. The RNAP catalytic core consists of 2 alpha, 1 beta, 1 beta' and 1 omega subunit. When a sigma factor is associated with the core the holoenzyme is formed, which can initiate transcription.

The catalysed reaction is RNA(n) + a ribonucleoside 5'-triphosphate = RNA(n+1) + diphosphate. Promotes RNA polymerase assembly. Latches the N- and C-terminal regions of the beta' subunit thereby facilitating its interaction with the beta and alpha subunits. The chain is DNA-directed RNA polymerase subunit omega from Nocardia farcinica (strain IFM 10152).